A 407-amino-acid polypeptide reads, in one-letter code: Subtilisin-like protease CPC735_013710 (407 aa).

An N-terminal signal peptide occupies residues 1 to 17; the sequence is MQLLNLSLFFLLPFATA. The propeptide occupies 18–115; the sequence is NPIPQDSQNI…VLPDQKIYLA (98 aa). Residues 31 to 114 form the Inhibitor I9 domain; that stretch reads QYIVTLKDGL…SVLPDQKIYL (84 aa). One can recognise a Peptidase S8 domain in the interval 124-407; it reads GWNLGYMSSK…VAYNGIQEML (284 aa). An N-linked (GlcNAc...) asparagine glycan is attached at Asn-145. Residues Asp-162 and His-194 each act as charge relay system in the active site. N-linked (GlcNAc...) asparagine glycans are attached at residues Asn-241, Asn-254, and Asn-341. Ser-350 functions as the Charge relay system in the catalytic mechanism. Asn-381 carries N-linked (GlcNAc...) asparagine glycosylation.

This sequence belongs to the peptidase S8 family.

The protein resides in the secreted. In terms of biological role, secreted subtilisin-like serine protease with keratinolytic activity that contributes to pathogenicity. This is Subtilisin-like protease CPC735_013710 from Coccidioides posadasii (strain C735) (Valley fever fungus).